Reading from the N-terminus, the 126-residue chain is RuBisCO chaperone RbcX (126 aa).

It belongs to the RbcX family. As to quaternary structure, homodimer. Interacts with the exposed C-terminal peptide of RbcL via its central cleft, contacts a second RbcL monomer via its peripheral polar surface.

The protein resides in the carboxysome. It is found in the cytoplasm. Functionally, an RbcL-specific chaperone. Required for assembly of the RbcL8 core. The central cleft of the RbcX homodimer (RbcX2) binds the C-terminus of a RbcL monomer, stabilizing the C-terminus and probably preventing its reassociation with chaperonin GroEL-ES. At the same time the peripheral region of RbcX2 binds a second RbcL monomer, bridging the RbcL homodimers in the correct orientation. The RbcX2(2)-bound RbcL dimers then assemble into the RbcL8 core (RbcL8-(RbcX2)8). RbcS binding triggers the release of RbcX2. In Thermosynechococcus vestitus (strain NIES-2133 / IAM M-273 / BP-1), this protein is RuBisCO chaperone RbcX.